Consider the following 186-residue polypeptide: Single-stranded DNA-binding protein 1 (186 aa).

The SSB domain occupies 1–108 (MDATVTVVGN…LEIDEIGPTL (108 aa)). The interval 120–186 (QAGHGVSPDP…EDFDSDEVPF (67 aa)) is disordered. Residues 132-141 (DSQTGQGIDS) show a composition bias toward polar residues. Residues 175-186 (SYEDFDSDEVPF) are compositionally biased toward acidic residues.

Homotetramer.

The polypeptide is Single-stranded DNA-binding protein 1 (ssb1) (Tropheryma whipplei (strain TW08/27) (Whipple's bacillus)).